The primary structure comprises 248 residues: Transcription termination/antitermination protein NusG (248 aa).

The KOW domain maps to 197–227 (KGDQVRVIEGPFMNFTGTVEEVHPEKRKLTV).

Belongs to the NusG family. In terms of assembly, monomer. Homodimer.

In terms of biological role, participates in transcription elongation, termination and antitermination. The sequence is that of Transcription termination/antitermination protein NusG from Aquifex aeolicus (strain VF5).